The chain runs to 404 residues: Cysteine desulfurase IscS (404 aa).

Pyridoxal 5'-phosphate is bound by residues Ala75–Thr76, Asn155, Gln183, and Ser203–His205. Lys206 carries the post-translational modification N6-(pyridoxal phosphate)lysine. Pyridoxal 5'-phosphate is bound at residue Thr243. The active-site Cysteine persulfide intermediate is Cys328. Residue Cys328 coordinates [2Fe-2S] cluster.

Belongs to the class-V pyridoxal-phosphate-dependent aminotransferase family. NifS/IscS subfamily. As to quaternary structure, homodimer. Forms a heterotetramer with IscU, interacts with other sulfur acceptors. The cofactor is pyridoxal 5'-phosphate.

The protein resides in the cytoplasm. It carries out the reaction (sulfur carrier)-H + L-cysteine = (sulfur carrier)-SH + L-alanine. Its pathway is cofactor biosynthesis; iron-sulfur cluster biosynthesis. Master enzyme that delivers sulfur to a number of partners involved in Fe-S cluster assembly, tRNA modification or cofactor biosynthesis. Catalyzes the removal of elemental sulfur atoms from cysteine to produce alanine. Functions as a sulfur delivery protein for Fe-S cluster synthesis onto IscU, an Fe-S scaffold assembly protein, as well as other S acceptor proteins. The chain is Cysteine desulfurase IscS from Proteus mirabilis (strain HI4320).